Here is a 346-residue protein sequence, read N- to C-terminus: MRDIGSQPAAGVRSMKVRDRALEIIRERISRGDPLYDFTGLASRPKVDAASDELRTYLSEALILPEIRELCREHFDAPEYEVLVAPRTTAAVIATILALEPRSVLHVLPEDGEAHPCVEEGCRLAGAEYEEVEESEIPDLDGFDLVVVTGCDVRWNVVSEDTLREVASAEAVTLLDDASGDRVRRLHGQKPGPRYGFDLVVTSCDKLMDGPRAGVLIGRDDLVEGVRRVCEGYGWTVDGPTLAAVKRAFEEFELSSLEARLKELERVYERLKDELDVERTGAGLVFHGVEREVEIGLGLLRRYGIMTITALGYERVDRTLRFNLLTEDAERFGYDRFVEVVKGELS.

Lys-206 bears the N6-(pyridoxal phosphate)lysine mark.

The cofactor is pyridoxal 5'-phosphate.

The protein is UPF0425 pyridoxal phosphate-dependent protein MK0620 of Methanopyrus kandleri (strain AV19 / DSM 6324 / JCM 9639 / NBRC 100938).